Consider the following 335-residue polypeptide: Glycerol-3-phosphate dehydrogenase [NAD(P)+] (335 aa).

Positions 10, 11, 31, and 105 each coordinate NADPH. Residues Lys105, Gly136, and Ser138 each contribute to the sn-glycerol 3-phosphate site. Ala140 contributes to the NADPH binding site. Lys191, Asp244, Ser254, Arg255, and Asn256 together coordinate sn-glycerol 3-phosphate. The active-site Proton acceptor is Lys191. Arg255 is an NADPH binding site. Residues Val279 and Glu281 each coordinate NADPH.

The protein belongs to the NAD-dependent glycerol-3-phosphate dehydrogenase family.

The protein localises to the cytoplasm. The catalysed reaction is sn-glycerol 3-phosphate + NAD(+) = dihydroxyacetone phosphate + NADH + H(+). The enzyme catalyses sn-glycerol 3-phosphate + NADP(+) = dihydroxyacetone phosphate + NADPH + H(+). It participates in membrane lipid metabolism; glycerophospholipid metabolism. Its function is as follows. Catalyzes the reduction of the glycolytic intermediate dihydroxyacetone phosphate (DHAP) to sn-glycerol 3-phosphate (G3P), the key precursor for phospholipid synthesis. This chain is Glycerol-3-phosphate dehydrogenase [NAD(P)+], found in Leptospira borgpetersenii serovar Hardjo-bovis (strain JB197).